A 1092-amino-acid polypeptide reads, in one-letter code: MEASAGLVAGSHNRNELVVIRRDGGGGGGVGGRRAAEAKAACQICGDDVGEGPDGEPFVACNECAFPVCRNCYDYERREGSQACPQCKTRFKRLKGCPRVAGDEEEDGVDDLEGEFGLDGREDDPQYIAESMLRANMSYGRGGDLQPFQPIPNVPLLTNGQMVDDIPPEQHALVPSYMGGGGGGGKRIHPLPFADPSVPVQPRSMDPSKDLAAYGYGSVAWKERMEGWKQKQERMQQLRSEGGGDWDGDGDADLPLMDEARQPLSRKVPISSSRINPYRMIIIIRLVVLGFFFHYRVMHPVNDAFALWLISVICEIWFAMSWILDQFPKWLPIERETYLDRLSLRFDKEGQPSQLAPVDFFVSTVDPSKEPPLVTANTVLSILSVDYPVEKVSCYVSDDGAAMLTFEALSETSEFAKKWVPFCKKFNIEPRAPEWYFQQKIDYLKDKVAASFVRERRAMKRDYEEFKVRINALVAKAQKVPEEGWTMQDGSPWPGNNVRDHPGMIQVFLGQSGGRDVEGNELPRLVYVSREKRPGYNHHKKAGAMNALVRVSAVLSNAPYLLNLDCDHYINNSKAIREAMCFMMDPLVGKKVCYVQFPQRFDGIDRHDRYANRNVVFFDINMKGLDGIQGPIYVGTGCVFRRQALYGYDAPKTKKPPSRTCNCWPKWCCCCCCGNRHTKKKTTKPKPEKKKRLFFKKAENQSPAYALGEIEEGAPGAETDKAGIVNQQKLEKKFGQSSVFVASTLLENGGTLKSASPASLLKEAIHVISCGYEDKTDWGKEIGWIYGSITEDILTGFKMHCHGWRSIYCIPKRPAFKGSAPLNLSDRLHQVLRWALGSVEIFFSKHCPLWYGYGGGLKFLERFSYINSIVYPWTSIPLLAYCTLPAICLLTGKFITPELTNVASLWFMSLFICIFVTGILEMRWSGVAIDDWWRNEQFWVIGGVSSHLFAVFQGLLKVLAGVDTSFTVTSKAGDDEEFSELYTFKWTTLLIPPTTLLLLNFIGVVAGVSNAINNGYESWGPLFGKLFFAFWVIVHLYPFLKGLVGRQNRTPTIVIVWSILLASIFSLLWVRIDPFLAKNNGPLLEECGLDCN.

Over 1–280 (MEASAGLVAG…SSSRINPYRM (280 aa)) the chain is Cytoplasmic. Cysteine 42, cysteine 45, cysteine 61, cysteine 64, cysteine 69, cysteine 72, cysteine 84, and cysteine 87 together coordinate Zn(2+). The RING-type; degenerate zinc-finger motif lies at 42–88 (CQICGDDVGEGPDGEPFVACNECAFPVCRNCYDYERREGSQACPQCK). The disordered stretch occupies residues 100 to 123 (VAGDEEEDGVDDLEGEFGLDGRED). Residues 103–116 (DEEEDGVDDLEGEF) show a composition bias toward acidic residues. Residues 281 to 301 (IIIIRLVVLGFFFHYRVMHPV) form a helical membrane-spanning segment. At 302–303 (ND) the chain is on the extracellular side. A helical membrane pass occupies residues 304-324 (AFALWLISVICEIWFAMSWIL). The Cytoplasmic portion of the chain corresponds to 325–868 (DQFPKWLPIE…FLERFSYINS (544 aa)). Serine 363, lysine 369, glutamate 370, and aspartate 399 together coordinate UDP-alpha-D-glucose. The active site involves aspartate 399. Residues 453-480 (VRERRAMKRDYEEFKVRINALVAKAQKV) adopt a coiled-coil conformation. Lysine 540 contacts UDP-alpha-D-glucose. 2 residues coordinate Mn(2+): lysine 541 and aspartate 565. The active site involves aspartate 792. Residues 869 to 889 (IVYPWTSIPLLAYCTLPAICL) form a helical membrane-spanning segment. The Extracellular segment spans residues 890–901 (LTGKFITPELTN). The chain crosses the membrane as a helical span at residues 902–922 (VASLWFMSLFICIFVTGILEM). At 923-937 (RWSGVAIDDWWRNEQ) the chain is on the cytoplasmic side. A helical transmembrane segment spans residues 938–958 (FWVIGGVSSHLFAVFQGLLKV). The Extracellular portion of the chain corresponds to 959–987 (LAGVDTSFTVTSKAGDDEEFSELYTFKWT). A helical membrane pass occupies residues 988 to 1008 (TLLIPPTTLLLLNFIGVVAGV). Topologically, residues 1009 to 1019 (SNAINNGYESW) are cytoplasmic. The helical transmembrane segment at 1020–1040 (GPLFGKLFFAFWVIVHLYPFL) threads the bilayer. At 1041 to 1049 (KGLVGRQNR) the chain is on the extracellular side. Residues 1050–1070 (TPTIVIVWSILLASIFSLLWV) traverse the membrane as a helical segment. Over 1071-1092 (RIDPFLAKNNGPLLEECGLDCN) the chain is Cytoplasmic.

It belongs to the glycosyltransferase 2 family. Plant cellulose synthase subfamily. Requires Mn(2+) as cofactor. Zn(2+) is required as a cofactor.

It localises to the cell membrane. It carries out the reaction [(1-&gt;4)-beta-D-glucosyl](n) + UDP-alpha-D-glucose = [(1-&gt;4)-beta-D-glucosyl](n+1) + UDP + H(+). The protein operates within glycan metabolism; plant cellulose biosynthesis. Functionally, probable catalytic subunit of cellulose synthase terminal complexes ('rosettes'), required for beta-1,4-glucan microfibril crystallization, a major mechanism of the cell wall formation. This chain is Probable cellulose synthase A catalytic subunit 6 [UDP-forming] (CESA6), found in Oryza sativa subsp. japonica (Rice).